The primary structure comprises 356 residues: MEPQTTAKVVLTTTKGPIEAELFAKEVPLACTRFLQLCKSGYYDSKPFYRVLPGELIQCGQQEAGNNTNSYPKLKDEPHTRIKLKRGYLAMASEYTENNRRVPNSATTEFFIALKEIPFSGTVIGKITGDTIYNAQDIARGELTEDGYPMYVQTVQNVEIVLGGGLVQETQKAGADAGADAESRENKSGSRDRPKKPKRKLQVNHDDDDDEEPVFTKKSVSKLVEDKFKKDNTNVAKKPKVEASAEQPEPAAVQATTTHHVQDAEDMTTEVDTVVSERLEKFRNMSRTKPDTKPKSMLISQEDRIRRRLGLGPDEDIPSDASDPSSDEDDDFDIFKHKFICPEDDKAEDSLITLGA.

The PPIase cyclophilin-type domain maps to 5-205 (TTAKVVLTTT…KPKRKLQVNH (201 aa)). Disordered stretches follow at residues 172–214 (KAGA…EEPV), 234–266 (NVAK…DAED), and 279–331 (LEKF…EDDD). Basic and acidic residues predominate over residues 181–192 (AESRENKSGSRD). Basic residues predominate over residues 193-202 (RPKKPKRKLQ). Positions 279-294 (LEKFRNMSRTKPDTKP) are enriched in basic and acidic residues.

Belongs to the cyclophilin-type PPIase family. CWC27 subfamily. As to quaternary structure, associated with the spliceosome.

The protein resides in the cytoplasm. It localises to the nucleus. The enzyme catalyses [protein]-peptidylproline (omega=180) = [protein]-peptidylproline (omega=0). PPIases accelerate the folding of proteins. It catalyzes the cis-trans isomerization of proline imidic peptide bonds in oligopeptides. Involved in pre-mRNA splicing. This chain is Peptidyl-prolyl isomerase CWC27 (CWC27), found in Yarrowia lipolytica (strain CLIB 122 / E 150) (Yeast).